The chain runs to 1254 residues: Structural polyprotein (1254 aa).

Residues 43–77 are host transcription inhibition; sequence LQAQQMQQLISAVSALTTKQNVKAPKGQRKQKQQK. The segment at 60-112 is disordered; sequence TKQNVKAPKGQRKQKQQKPKEKKEKQKKKPTXKKKQQQKPKPQAKKKKPGRRE. Residues 70–108 carry the Nuclear localization signal motif; that stretch reads QRKQKQQKPKEKKEKQKKKPTXKKKQQQKPKPQAKKKKP. Positions 84-110 are enriched in basic residues; it reads KQKKKPTXKKKQQQKPKPQAKKKKPGR. Residues 95–123 form a binding to the viral RNA region; the sequence is QQQKPKPQAKKKKPGRRERMCMKIENDCI. Positions 108 to 122 are ribosome-binding; it reads PGRRERMCMKIENDC. A disulfide bridge connects residues Cys122 and Cys137. Residues 122-270 enclose the Peptidase S3 domain; that stretch reads CIFEVKLDGK…RVTPEGTEEW (149 aa). Catalysis depends on His148, which acts as the Charge relay system. The Nuclear export signal signature appears at 153–163; it reads IDNPDLAKLTY. Positions 164-169 are interaction with spike glycoprotein E2; the sequence is KKSSKY. The active-site Charge relay system is the Asp170. Positions 192–202 are dimerization of the capsid protein; it reads PEGHYNWHHGA. The Charge relay system role is filled by Ser222. Residues 228–232 are dimerization of the capsid protein; it reads DNKGR. Over 270 to 694 the chain is Extracellular; that stretch reads WSAALMMCIL…PHEIIQYYYG (425 aa). Residues 271–282 form a functions as an uncleaved signal peptide for the precursor of protein E3/E2 region; that stretch reads SAALMMCILANT. 3 disulfide bridges follow: Cys277–Cys286, Cys291–Cys295, and Cys294–Cys326. Asn281 is a glycosylation site (N-linked (GlcNAc...) asparagine; by host). Residue Asn328 is glycosylated (N-linked (GlcNAc...) asparagine; by host). 6 disulfides stabilise this stretch: Cys353/Cys459, Cys356/Cys362, Cys425/Cys439, Cys487/Cys599, Cys535/Cys559, and Cys537/Cys554. Interaction with host Mxra8 receptor regions lie at residues 360–363 and 396–398; these read YFCY and HAH. Residues 518–521 form an interaction with host Mxra8 receptor region; sequence TAGN. Asn534 carries an N-linked (GlcNAc...) asparagine; by host glycan. Residues 550–556 are interaction with host Mxra8 receptor; sequence TINTCKI. A glycan (N-linked (GlcNAc...) asparagine; by host) is linked at Asn596. The chain crosses the membrane as a helical span at residues 695–715; the sequence is LYPAATIAAVSGASLMALLTL. Residues 716–756 lie on the Cytoplasmic side of the membrane; sequence AATCCMLATARRKCLTPYALTPGAVVPLTLGLLXCAPRANA. Cys719 carries the S-palmitoyl cysteine; by host lipid modification. The segment at 724 to 728 is interaction with the capsid protein; that stretch reads TARRK. S-palmitoyl cysteine; by host attachment occurs at residues Cys729 and Cys750. The segment at 729–749 is transient transmembrane before p62-6K protein processing; that stretch reads CLTPYALTPGAVVPLTLGLLX. Cys729 and Cys750 are joined by a disulfide. Residues 757–771 lie on the Extracellular side of the membrane; sequence ASFAETMAYLWDENK. A helical membrane pass occupies residues 772–792; that stretch reads TLFWMEXXXXXXALALLACCI. A topological domain (cytoplasmic) is located at residue Lys793. A helical membrane pass occupies residues 794 to 814; the sequence is SLICCCKPFSFLVLLSLGASA. At 815–1231 the chain is on the extracellular side; it reads KAYEHTATIP…AMTWVQRMAS (417 aa). 4 disulfide bridges follow: Cys865-Cys930, Cys878-Cys910, Cys879-Cys912, and Cys884-Cys894. The E1 fusion peptide loop stretch occupies residues 900–917; sequence VYPFMWGGAYCFCDSENT. Residue Asn957 is glycosylated (N-linked (GlcNAc...) asparagine; by host). 4 disulfides stabilise this stretch: Cys1075-Cys1087, Cys1117-Cys1192, Cys1122-Cys1196, and Cys1144-Cys1186. The helical transmembrane segment at 1232–1252 threads the bilayer; it reads GLGGLALIAVVVLVLVTCITM. Cys1249 carries S-palmitoyl cysteine; by host lipidation. A lipid anchor (S-stearoyl cysteine; by host) is attached at Cys1249. Over 1253–1254 the chain is Cytoplasmic; sequence RR.

As to quaternary structure, homodimer. Homomultimer. Interacts with host karyopherin KPNA4; this interaction allows the nuclear import of the viral capsid protein. Interacts with spike glycoprotein E2. Interacts with host IRAK1; the interaction leads to inhibition of IRAK1-dependent signaling. The precursor of protein E3/E2 and E1 form a heterodimer shortly after synthesis. In terms of assembly, the precursor of protein E3/E2 and E1 form a heterodimer shortly after synthesis. Processing of the precursor of protein E3/E2 into E2 and E3 results in a heterodimer of the spike glycoproteins E2 and E1. Spike at virion surface are constituted of a trimer of E2-E1 heterodimers. After target cell attachment and endocytosis, E1 change conformation to form homotrimers. Interacts with 6K protein. As to quaternary structure, interacts with spike glycoprotein E1. Processing of the precursor of protein E3/E2 into E2 and E3 results in a heterodimer of the spike glycoproteins E2 and E1. Spike at virion surface are constituted of a trimer of E2-E1 heterodimers. Interacts with 6K protein. Interacts with host MXRA8; this interaction mediates virus entry. In terms of processing, structural polyprotein: Specific enzymatic cleavages in vivo yield mature proteins. Capsid protein is auto-cleaved during polyprotein translation, unmasking a signal peptide at the N-terminus of the precursor of E3/E2. The remaining polyprotein is then targeted to the host endoplasmic reticulum, where host signal peptidase cleaves it into pE2, 6K and E1 proteins. pE2 is further processed to mature E3 and E2 by host furin in trans-Golgi vesicle. Palmitoylated via thioester bonds. These palmitoylations may induce disruption of the C-terminus transmembrane. This would result in the reorientation of E2 C-terminus from lumenal to cytoplasmic side. Post-translationally, N-glycosylated. In terms of processing, palmitoylated via thioester bonds.

It is found in the virion. The protein localises to the host cytoplasm. Its subcellular location is the host cell membrane. The protein resides in the host nucleus. It localises to the virion membrane. It is found in the host Golgi apparatus. The protein localises to the host trans-Golgi network. Its subcellular location is the host endoplasmic reticulum. The catalysed reaction is Autocatalytic release of the core protein from the N-terminus of the togavirus structural polyprotein by hydrolysis of a -Trp-|-Ser- bond.. In terms of biological role, forms an icosahedral capsid with a T=4 symmetry composed of 240 copies of the capsid protein surrounded by a lipid membrane through which penetrate 80 spikes composed of trimers of E1-E2 heterodimers. The capsid protein binds to the viral RNA genome at a site adjacent to a ribosome binding site for viral genome translation following genome release. Possesses a protease activity that results in its autocatalytic cleavage from the nascent structural protein. Following its self-cleavage, the capsid protein transiently associates with ribosomes, and within several minutes the protein binds to viral RNA and rapidly assembles into icosahedric core particles. The resulting nucleocapsid eventually associates with the cytoplasmic domain of the spike glycoprotein E2 at the cell membrane, leading to budding and formation of mature virions. In case of infection, new virions attach to target cells and after clathrin-mediated endocytosis their membrane fuses with the host endosomal membrane. This leads to the release of the nucleocapsid into the cytoplasm, followed by an uncoating event necessary for the genomic RNA to become accessible. The uncoating might be triggered by the interaction of capsid proteins with ribosomes. Binding of ribosomes would release the genomic RNA since the same region is genomic RNA-binding and ribosome-binding. Specifically inhibits interleukin-1 receptor-associated kinase 1/IRAK1-dependent signaling during viral entry, representing a means by which the alphaviruses may evade innate immune detection and activation prior to viral gene expression. Provides the signal sequence for the translocation of the precursor of protein E3/E2 to the host endoplasmic reticulum. Furin-cleaved E3 remains associated with spike glycoprotein E1 and mediates pH protection of the latter during the transport via the secretory pathway. After virion release from the host cell, the assembly protein E3 is gradually released in the extracellular space. Its function is as follows. Plays a role in viral attachment to target host cell, by binding to the cell receptor MXRA8. The host LDLR may also act as a cell receptor for viral entry. Synthesized as a p62 precursor which is processed by furin at the cell membrane just before virion budding, giving rise to E2-E1 heterodimer. The p62-E1 heterodimer is stable, whereas E2-E1 is unstable and dissociate at low pH. p62 is processed at the last step, presumably to avoid E1 fusion activation before its final export to cell surface. E2 C-terminus contains a transitory transmembrane that would be disrupted by palmitoylation, resulting in reorientation of the C-terminal tail from lumenal to cytoplasmic side. This step is critical since E2 C-terminus is involved in budding by interacting with capsid proteins. This release of E2 C-terminus in cytoplasm occurs lately in protein export, and precludes premature assembly of particles at the endoplasmic reticulum membrane. Functionally, acts as a viroporin that participates in virus glycoprotein processing and transport to the plasma membrane, cell permeabilization and budding of viral particles. The cation channel is permeable to Na(+)&gt;K(+)&gt;Ca(2+) in vitro. Disrupts the calcium homeostasis of the cell, probably at the endoplasmic reticulum level. This leads to cytoplasmic calcium elevation. Because of its lipophilic properties, the 6K protein is postulated to influence the selection of lipids that interact with the transmembrane domains of the glycoproteins, which, in turn, affects the deformability of the bilayer required for the extreme curvature that occurs as budding proceeds. Present in low amount in virions, about 3% compared to viral glycoproteins. In terms of biological role, class II viral fusion protein. Fusion activity is inactive as long as E1 is bound to E2 in mature virion. After virus attachment to target cell via host MXRA8 and endocytosis, acidification of the endosome induce dissociation of E1/E2 heterodimer and concomitant trimerization of the E1 subunits. This E1 trimer is fusion active, and promotes release of viral nucleocapsid in cytoplasm after endosome and viral membrane fusion. Efficient fusion requires the presence of cholesterol and sphingolipid in the target membrane. The chain is Structural polyprotein from Ross river virus (strain NB5092) (RRV).